A 1038-amino-acid polypeptide reads, in one-letter code: Rap guanine nucleotide exchange factor 1 (1038 aa).

Residue 10 to 140 (RLSPLHTFSD…DILTDETPSD (131 aa)) participates in a nucleoside 3',5'-cyclic phosphate binding. Positions 234–316 (TDNHQVIRDI…KTNSYYRWVQ (83 aa)) constitute a DEP domain. A nucleoside 3',5'-cyclic phosphate is bound at residue 375-492 (ALSHLSTMVK…VRLKDYGEDV (118 aa)). The N-terminal Ras-GEF domain occupies 516–654 (CGYSVMAGKA…DILTRIGSIR (139 aa)). The Ras-GEF domain occupies 795-1028 (DSQELAHQLF…MQLSYEIEPK (234 aa)).

Interacts (via C-terminus) with drn-1. In terms of tissue distribution, expressed specifically in neurons including the nerve ring, ventral and dorsal nerve cord motor neurons and tail ganglia.

Functionally, guanine nucleotide-releasing protein. Together with GTPase drn-1, may regulate acetylcholine release at the neuromuscular junctions probably downstream of G-protein gsa-1 and adenylate cyclase acy-1. This is Rap guanine nucleotide exchange factor 1 (epac-1) from Caenorhabditis elegans.